The primary structure comprises 362 residues: Adenosine deaminase (362 aa).

The Zn(2+) site is built by His19 and His21. Positions 21, 23, and 181 each coordinate substrate. Zn(2+) is bound at residue His208. Glu211 acts as the Proton donor in catalysis. Asp300 is a Zn(2+) binding site.

This sequence belongs to the metallo-dependent hydrolases superfamily. Adenosine and AMP deaminases family. Adenosine deaminase subfamily. The cofactor is Zn(2+).

The catalysed reaction is adenosine + H2O + H(+) = inosine + NH4(+). It carries out the reaction 2'-deoxyadenosine + H2O + H(+) = 2'-deoxyinosine + NH4(+). Its function is as follows. Catalyzes the hydrolytic deamination of adenosine and 2-deoxyadenosine. The sequence is that of Adenosine deaminase from Mycobacterium leprae (strain TN).